The following is a 118-amino-acid chain: UPF0344 protein RBAM_010920 (118 aa).

4 helical membrane passes run 4–24 (WHIT…GLYG), 33–53 (ITHM…AELF), 62–82 (EYAG…MLVI), and 93–113 (LWIG…HLPI).

Belongs to the UPF0344 family.

It localises to the cell membrane. This Bacillus velezensis (strain DSM 23117 / BGSC 10A6 / LMG 26770 / FZB42) (Bacillus amyloliquefaciens subsp. plantarum) protein is UPF0344 protein RBAM_010920.